Reading from the N-terminus, the 143-residue chain is Putative cytokinin riboside 5'-monophosphate phosphoribohydrolase LOG9 (143 aa).

Substrate contacts are provided by residues 23–24 (RK), 41–47 (RYETMEE), and threonine 53.

It belongs to the LOG family.

It catalyses the reaction N(6)-(dimethylallyl)adenosine 5'-phosphate + H2O = N(6)-dimethylallyladenine + D-ribose 5-phosphate. The enzyme catalyses 9-ribosyl-trans-zeatin 5'-phosphate + H2O = trans-zeatin + D-ribose 5-phosphate. Functionally, cytokinin-activating enzyme working in the direct activation pathway. Phosphoribohydrolase that converts inactive cytokinin nucleotides to the biologically active free-base forms. This is Putative cytokinin riboside 5'-monophosphate phosphoribohydrolase LOG9 (LOG9) from Arabidopsis thaliana (Mouse-ear cress).